Consider the following 213-residue polypeptide: MDQEFWQKKWASNVIGFHLPDTNPVLSEFWKALNPTREQTVFVPLCGKSMDLDWLAERHNSVSGVELSQIAVRAFFAERLYTPTVTTLSSTLELYDFDEFTIFAGDYFTAPIEATDLIYDRAALVALPKEMRSEYVQVLRSRLKEGGRILLVTLDYDQNEMSGPPFSVPEDEVRSLFSGMSITKLQRDEADADHPRIKKGLTRFAEEVWLIKS.

Residues tryptophan 10, leucine 45, glutamate 66, and arginine 121 each contribute to the S-adenosyl-L-methionine site.

The protein belongs to the class I-like SAM-binding methyltransferase superfamily. TPMT family.

It localises to the cytoplasm. It carries out the reaction S-adenosyl-L-methionine + a thiopurine = S-adenosyl-L-homocysteine + a thiopurine S-methylether.. This is Thiopurine S-methyltransferase from Aliivibrio salmonicida (strain LFI1238) (Vibrio salmonicida (strain LFI1238)).